Here is a 312-residue protein sequence, read N- to C-terminus: RNA binding protein fox-1 homolog 3 (312 aa).

The span at 1–29 shows a compositional bias: pro residues; that stretch reads MAQPYPPAQYPPPPQNGIPAEYAPPPPHP. The disordered stretch occupies residues 1-104; it reads MAQPYPPAQY…KQQPKRLHVS (104 aa). Over residues 49–87 the composition is skewed to polar residues; the sequence is TPAQTHPEQPGSEASTQPIAGTQTVPQTDEAAQTDSQPL. One can recognise an RRM domain in the interval 100-175; it reads RLHVSNIPFR…RKIEVNNATA (76 aa). Arg223 bears the Asymmetric dimethylarginine; alternate mark. Omega-N-methylarginine; alternate is present on Arg223. At Arg272 the chain carries Asymmetric dimethylarginine.

Its subcellular location is the nucleus. The protein localises to the cytoplasm. Pre-mRNA alternative splicing regulator. Regulates alternative splicing of RBFOX2 to enhance the production of mRNA species that are targeted for nonsense-mediated decay (NMD). This is RNA binding protein fox-1 homolog 3 (RBFOX3) from Homo sapiens (Human).